A 423-amino-acid polypeptide reads, in one-letter code: uncharacterized protein (423 aa).

The N-terminal stretch at 1–16 (MKSRIFFITLLTIVAA) is a signal peptide. At 17–402 (QESADQLCSS…SSSAKEEQTS (386 aa)) the chain is on the extracellular side. Disulfide bonds link cysteine 24–cysteine 217, cysteine 33–cysteine 43, cysteine 36–cysteine 68, cysteine 46–cysteine 57, cysteine 219–cysteine 238, cysteine 230–cysteine 241, cysteine 243–cysteine 252, cysteine 254–cysteine 288, cysteine 271–cysteine 286, cysteine 280–cysteine 291, cysteine 293–cysteine 303, cysteine 305–cysteine 327, cysteine 310–cysteine 325, cysteine 319–cysteine 330, cysteine 332–cysteine 341, and cysteine 343–cysteine 350. Asparagine 65 carries N-linked (GlcNAc...) asparagine glycosylation. A cysteine-rich tandem repeats region spans residues 215-350 (CGCECEKHPE…CSCSTASNNC (136 aa)). I-EGF domains lie at 219–253 (CEKHPEINSRLCHQNGHLVCGQCVCDQSRGGDKCE), 254–304 (CPLA…KFCQ), and 305–342 (CDNDSCPLAVNGKVCSGNGVCDCGVCKCEMGWERDDCS). Asparagine 274 carries N-linked (GlcNAc...) asparagine glycosylation. Residue asparagine 307 is glycosylated (N-linked (GlcNAc...) asparagine). Residues 354 to 406 (GTPAPEEKDKPESVPEEPEATEKPDDMPSDSDLEKELDESSSAKEEQTSSSGV) are disordered. Residues 380 to 392 (MPSDSDLEKELDE) show a composition bias toward acidic residues. Residues 403–421 (SSGVVSRVCVLLTFFLLVL) traverse the membrane as a helical segment. The Cytoplasmic segment spans residues 422-423 (NF).

It belongs to the integrin beta chain family.

The protein localises to the membrane. This is an uncharacterized protein from Caenorhabditis elegans.